We begin with the raw amino-acid sequence, 274 residues long: 3-methyl-2-oxobutanoate hydroxymethyltransferase (274 aa).

Positions 49 and 88 each coordinate Mg(2+). 3-methyl-2-oxobutanoate contacts are provided by residues 49-50 (DS), Asp88, and Lys118. Residue Glu120 coordinates Mg(2+). The active-site Proton acceptor is Glu187.

The protein belongs to the PanB family. Homodecamer; pentamer of dimers. It depends on Mg(2+) as a cofactor.

It localises to the cytoplasm. It carries out the reaction 3-methyl-2-oxobutanoate + (6R)-5,10-methylene-5,6,7,8-tetrahydrofolate + H2O = 2-dehydropantoate + (6S)-5,6,7,8-tetrahydrofolate. It functions in the pathway cofactor biosynthesis; (R)-pantothenate biosynthesis; (R)-pantoate from 3-methyl-2-oxobutanoate: step 1/2. Catalyzes the reversible reaction in which hydroxymethyl group from 5,10-methylenetetrahydrofolate is transferred onto alpha-ketoisovalerate to form ketopantoate. This is 3-methyl-2-oxobutanoate hydroxymethyltransferase from Rhodopseudomonas palustris (strain HaA2).